A 192-amino-acid chain; its full sequence is RNA pyrophosphohydrolase (192 aa).

The region spanning Gly6–Lys149 is the Nudix hydrolase domain. A Nudix box motif is present at residues Gly38 to Gly59.

The protein belongs to the Nudix hydrolase family. RppH subfamily. The cofactor is a divalent metal cation.

Accelerates the degradation of transcripts by removing pyrophosphate from the 5'-end of triphosphorylated RNA, leading to a more labile monophosphorylated state that can stimulate subsequent ribonuclease cleavage. The sequence is that of RNA pyrophosphohydrolase from Histophilus somni (strain 129Pt) (Haemophilus somnus).